Here is a 434-residue protein sequence, read N- to C-terminus: 3-phosphoshikimate 1-carboxyvinyltransferase (434 aa).

3-phosphoshikimate contacts are provided by lysine 22, serine 23, and arginine 27. Residue lysine 22 coordinates phosphoenolpyruvate. The phosphoenolpyruvate site is built by glycine 93 and arginine 121. 6 residues coordinate 3-phosphoshikimate: serine 168, serine 169, glutamine 170, serine 199, aspartate 320, and lysine 347. Glutamine 170 provides a ligand contact to phosphoenolpyruvate. The Proton acceptor role is filled by aspartate 320. The phosphoenolpyruvate site is built by arginine 351, arginine 394, and lysine 419.

The protein belongs to the EPSP synthase family. Monomer.

It is found in the cytoplasm. It catalyses the reaction 3-phosphoshikimate + phosphoenolpyruvate = 5-O-(1-carboxyvinyl)-3-phosphoshikimate + phosphate. It participates in metabolic intermediate biosynthesis; chorismate biosynthesis; chorismate from D-erythrose 4-phosphate and phosphoenolpyruvate: step 6/7. In terms of biological role, catalyzes the transfer of the enolpyruvyl moiety of phosphoenolpyruvate (PEP) to the 5-hydroxyl of shikimate-3-phosphate (S3P) to produce enolpyruvyl shikimate-3-phosphate and inorganic phosphate. The chain is 3-phosphoshikimate 1-carboxyvinyltransferase from Burkholderia cenocepacia (strain HI2424).